A 79-amino-acid chain; its full sequence is Calcium/calmodulin-dependent protein kinase II inhibitor 2 (79 aa).

Residues 1–21 form a disordered region; it reads MSEILPYGEDKMGRFGADPEG. The interval 43–69 is inhibitory domain; it reads KRPPKLGQIGRAKRVVIEDDRIDDVLK.

The protein belongs to the CAMK2N family. Interacts with CAMK2A and CAMK2B in the presence of Ca(2+)/calmodulin or after autophosphorylation.

Its subcellular location is the nucleus. The protein localises to the cytoplasm. It localises to the cytosol. The protein resides in the synapse. In terms of biological role, potent and specific cellular inhibitor of CaM-kinase II (CAMK2). Traps Ca(2+)/calmodulin on CAMK2. This chain is Calcium/calmodulin-dependent protein kinase II inhibitor 2 (Camk2n2), found in Mus musculus (Mouse).